Here is a 359-residue protein sequence, read N- to C-terminus: AA9 family lytic polysaccharide monooxygenase C (359 aa).

The first 16 residues, 1 to 16, serve as a signal peptide directing secretion; the sequence is MKTGSILAALVASASA. Residues His17 and His99 each contribute to the Cu(2+) site. Disulfide bonds link Cys55–Cys185 and Cys155–Cys243. 2 residues coordinate O2: His171 and Gln180. Residue Tyr182 coordinates Cu(2+). Asn189 and Asn284 each carry an N-linked (GlcNAc...) asparagine glycan. The tract at residues 244-320 is disordered; the sequence is PAGGSGGSSP…NPQPTNGGNS (77 aa). A compositionally biased stretch (low complexity) spans 251–296; that stretch reads SSPAPATTASTPKPTSASAPKPVSTTASTPKPTNGSGSGTGAAHST. Over residues 307 to 319 the composition is skewed to polar residues; it reads TKASNPQPTNGGN. The CBM1 domain occupies 323–358; sequence RAAALYGQCGGKGWTGPTSCASGTCKFSNDWYSQCL.

This sequence belongs to the polysaccharide monooxygenase AA9 family. Cu(2+) serves as cofactor.

Its subcellular location is the secreted. It carries out the reaction [(1-&gt;4)-beta-D-glucosyl]n+m + reduced acceptor + O2 = 4-dehydro-beta-D-glucosyl-[(1-&gt;4)-beta-D-glucosyl]n-1 + [(1-&gt;4)-beta-D-glucosyl]m + acceptor + H2O.. Activity in inhibited by excessive amounts of H(2)O(2). Lytic polysaccharide monooxygenase (LPMO) that depolymerizes crystalline and amorphous polysaccharides via the oxidation of scissile alpha- or beta-(1-4)-glycosidic bonds, yielding C4 oxidation products. Catalysis by LPMOs requires the reduction of the active-site copper from Cu(II) to Cu(I) by a reducing agent and H(2)O(2) or O(2) as a cosubstrate. Degrades various hemicelluloses, in particular xyloglucan. Active on tamarind xyloglucan and konjac glucomannan. Acts on the glucose backbone of xyloglucan, accepting various substitutions (xylose, galactose) in almost allpositions. In contrast to all previously characterized LPMOs, which are active only on polysaccharides, is able to cleave soluble cello-oligosaccharides as short as a tetramer. The cello-oligosaccharide products released by this enzyme contain a C4 gemdiol/keto group at the non-reducing end. Binds to the inner wood cell wall layer and consumes enzymatically generated H(2)O(2). In Neurospora crassa (strain ATCC 24698 / 74-OR23-1A / CBS 708.71 / DSM 1257 / FGSC 987), this protein is AA9 family lytic polysaccharide monooxygenase C (gh61-3).